Here is a 226-residue protein sequence, read N- to C-terminus: Ribonuclease 3 (226 aa).

The RNase III domain occupies 6 to 128 (INKLQRKLGY…LIGGVFLDSD (123 aa)). Glutamate 41 is a binding site for Mg(2+). Aspartate 45 is a catalytic residue. 2 residues coordinate Mg(2+): aspartate 114 and glutamate 117. The active site involves glutamate 117. Residues 155-225 (DPKTRLQEFL…AEQALIKLGI (71 aa)) form the DRBM domain.

This sequence belongs to the ribonuclease III family. Homodimer. The cofactor is Mg(2+).

The protein resides in the cytoplasm. It carries out the reaction Endonucleolytic cleavage to 5'-phosphomonoester.. Functionally, digests double-stranded RNA. Involved in the processing of primary rRNA transcript to yield the immediate precursors to the large and small rRNAs (23S and 16S). Processes some mRNAs, and tRNAs when they are encoded in the rRNA operon. Processes pre-crRNA and tracrRNA of type II CRISPR loci if present in the organism. The sequence is that of Ribonuclease 3 from Erwinia tasmaniensis (strain DSM 17950 / CFBP 7177 / CIP 109463 / NCPPB 4357 / Et1/99).